We begin with the raw amino-acid sequence, 140 residues long: Envelope protein A28 homolog (140 aa).

Residues 1–21 (MNPVTVFFVVVVTVAVCMILF) form a helical; Signal-anchor for type II membrane protein membrane-spanning segment. Residues 22–140 (QVYSIYLNYD…RECTFLKSAL (119 aa)) lie on the Virion surface side of the membrane.

This sequence belongs to the poxviridae A28 protein family. Post-translationally, contains two intramolecular disulfide bonds. They are created by the viral disulfide bond formation pathway, a poxvirus-specific pathway that operates on the cytoplasmic side of the MV membranes.

It localises to the virion membrane. In terms of biological role, envelope protein required for virus entry into host cell and for cell-cell fusion (syncytium formation). In Myxoma virus (strain Lausanne) (MYXV), this protein is Envelope protein A28 homolog.